The following is a 226-amino-acid chain: MKAVIFDLDGVITDTAEYHFLAWKHIAEQIDIPFDRDMNERLKGISREESLESILIFGGAETKYTNAEKQELMHRKNRDYQMLISKLTPEDLLPGIGRLLCQLKNENIKIGLASSSRNAPKILRRLAIIDDFHAIVDPTTLAKGKPDPDIFLTAAAMLDVSPADCAAIEDAEAGISAIKSAGMFAVGVGQGQPMLGADLVVRQTSDLTLELLHEEWEQYRIRESIP.

Residue Asp-7 is the Nucleophile of the active site. Residues Asp-7 and Asp-9 each coordinate Mg(2+). A 4-aspartylphosphate modification is found at Asp-7. The active-site Proton donor/acceptor is the Asp-9. Residues Asp-9, Gly-44, Ile-45, Arg-47, Ser-116, Arg-117, and Asn-118 each coordinate beta-D-glucose 6-phosphate. Asp-170 is a Mg(2+) binding site.

It belongs to the HAD-like hydrolase superfamily. CbbY/CbbZ/Gph/YieH family. In terms of assembly, homodimer. Mg(2+) serves as cofactor. In terms of processing, autophosphorylated.

The protein localises to the cytoplasm. It carries out the reaction beta-D-glucose 1-phosphate = beta-D-glucose 6-phosphate. Functionally, catalyzes the interconversion of D-glucose 1-phosphate (G1P) and D-glucose 6-phosphate (G6P), forming beta-D-glucose 1,6-(bis)phosphate (beta-G16P) as an intermediate. This chain is Beta-phosphoglucomutase (yvdM), found in Bacillus subtilis (strain 168).